Consider the following 47-residue polypeptide: Lysis protein for colicin E5 (47 aa).

Residues 1 to 19 form the signal peptide; sequence MKKITWIILLLLAAIILAA. Residue C20 is the site of N-palmitoyl cysteine attachment. C20 carries the S-diacylglycerol cysteine lipid modification.

Its subcellular location is the cell outer membrane. In terms of biological role, lysis proteins are required for both colicin release and partial cell lysis. The chain is Lysis protein for colicin E5 (lys) from Escherichia coli.